Here is a 577-residue protein sequence, read N- to C-terminus: Chaperonin CPN60-1, mitochondrial (577 aa).

The transit peptide at 1–34 directs the protein to the mitochondrion; that stretch reads MYRAAASLASKARQAGNSLATRQVGSRLAWSRNY.

This sequence belongs to the chaperonin (HSP60) family.

The protein localises to the mitochondrion. Implicated in mitochondrial protein import and macromolecular assembly. May facilitate the correct folding of imported proteins. May also prevent misfolding and promote the refolding and proper assembly of unfolded polypeptides generated under stress conditions in the mitochondrial matrix. The protein is Chaperonin CPN60-1, mitochondrial (CPN60I) of Zea mays (Maize).